Reading from the N-terminus, the 414-residue chain is uncharacterized protein (414 aa).

The signal sequence occupies residues 1 to 16 (MRVILLLAFLISLTEC). In terms of domain architecture, Myb-like 1 spans 20-59 (SEDLALYDLVEEVGVNFYEWFDIPRDASSNQVKKAYRKLT). Positions 35-99 (NFYEWFDIPR…ELREKYDNVL (65 aa)) constitute a J domain. A helical membrane pass occupies residues 125 to 145 (ILVLLFIGTIAHYLMMWAAYF). The interval 211 to 234 (MTPKEVEPEEPTEEELAQQRRQQR) is disordered. Residues 217–226 (EPEEPTEEEL) are compositionally biased toward acidic residues. The 47-residue stretch at 274 to 320 (AQKQSGATWTPDELASLVRLSTEKYPAGTPNRWEQMGRVLNRSAEDV) folds into the Myb-like 2 domain. Positions 352–407 (KSEDDWSQAEQKAFETALQKYPKGTDERWERISEEIGSKTKKQVMVRFKQLAEMIR) constitute an SANT domain.

It localises to the nucleus membrane. This is an uncharacterized protein from Caenorhabditis elegans.